Reading from the N-terminus, the 216-residue chain is ATP-dependent Clp protease proteolytic subunit (216 aa).

The Nucleophile role is filled by Ser-101. His-126 is a catalytic residue.

Belongs to the peptidase S14 family. Component of the chloroplastic Clp protease core complex.

The protein resides in the plastid. Its subcellular location is the chloroplast stroma. The enzyme catalyses Hydrolysis of proteins to small peptides in the presence of ATP and magnesium. alpha-casein is the usual test substrate. In the absence of ATP, only oligopeptides shorter than five residues are hydrolyzed (such as succinyl-Leu-Tyr-|-NHMec, and Leu-Tyr-Leu-|-Tyr-Trp, in which cleavage of the -Tyr-|-Leu- and -Tyr-|-Trp bonds also occurs).. In terms of biological role, cleaves peptides in various proteins in a process that requires ATP hydrolysis. Has a chymotrypsin-like activity. Plays a major role in the degradation of misfolded proteins. The sequence is that of ATP-dependent Clp protease proteolytic subunit from Oryza nivara (Indian wild rice).